The primary structure comprises 63 residues: Large ribosomal subunit protein uL29 (63 aa).

The protein belongs to the universal ribosomal protein uL29 family.

The sequence is that of Large ribosomal subunit protein uL29 from Caulobacter vibrioides (strain ATCC 19089 / CIP 103742 / CB 15) (Caulobacter crescentus).